Consider the following 412-residue polypeptide: Hyaluronidase-3 (412 aa).

The N-terminal stretch at 1-22 (MITQLGLTLVVGLTLCLVHVQA) is a signal peptide. Cystine bridges form between Cys42–Cys332, Cys206–Cys221, Cys357–Cys368, Cys362–Cys396, and Cys398–Cys407. N-linked (GlcNAc...) asparagine glycosylation is present at Asn69. The active-site Proton donor is the Glu129. An N-linked (GlcNAc...) asparagine glycan is attached at Asn216. Residues 353 to 408 (AATACSHQRCHGHGRCSWKDPGQMEAFLHLQPDDNLGAWKSFRCRCYLGWSGPTCL) enclose the EGF-like domain.

The protein belongs to the glycosyl hydrolase 56 family. Post-translationally, N-glycosylated.

Its subcellular location is the secreted. The protein localises to the cell membrane. It localises to the cytoplasmic vesicle. It is found in the secretory vesicle. The protein resides in the acrosome. Its subcellular location is the endoplasmic reticulum. The protein localises to the early endosome. The catalysed reaction is Random hydrolysis of (1-&gt;4)-linkages between N-acetyl-beta-D-glucosamine and D-glucuronate residues in hyaluronate.. Its function is as follows. Facilitates sperm penetration into the layer of cumulus cells surrounding the egg by digesting hyaluronic acid. Involved in induction of the acrosome reaction in the sperm. Involved in follicular atresia, the breakdown of immature ovarian follicles that are not selected to ovulate. Induces ovarian granulosa cell apoptosis, possibly via apoptotic signaling pathway involving CASP8 and CASP3 activation, and poly(ADP-ribose) polymerase (PARP) cleavage. Has no hyaluronidase activity in embryonic fibroblasts in vitro. Has no hyaluronidase activity in granulosa cells in vitro. This Rattus norvegicus (Rat) protein is Hyaluronidase-3 (Hyal3).